The following is a 141-amino-acid chain: Large ribosomal subunit protein uL11 (141 aa).

Belongs to the universal ribosomal protein uL11 family. As to quaternary structure, part of the ribosomal stalk of the 50S ribosomal subunit. Interacts with L10 and the large rRNA to form the base of the stalk. L10 forms an elongated spine to which L12 dimers bind in a sequential fashion forming a multimeric L10(L12)X complex. Post-translationally, one or more lysine residues are methylated.

Its function is as follows. Forms part of the ribosomal stalk which helps the ribosome interact with GTP-bound translation factors. This chain is Large ribosomal subunit protein uL11, found in Pseudothermotoga lettingae (strain ATCC BAA-301 / DSM 14385 / NBRC 107922 / TMO) (Thermotoga lettingae).